We begin with the raw amino-acid sequence, 483 residues long: Nuc-1 negative regulatory protein preg (483 aa).

Composition is skewed to low complexity over residues Met-1 to Ser-32, Ser-60 to Ile-80, and Ala-176 to Val-200. Disordered stretches follow at residues Met-1–Gln-112, Asn-164–Asp-234, and Cys-434–Thr-483. Acidic residues predominate over residues Pro-435–Thr-473.

This sequence belongs to the cyclin family.

In terms of biological role, negative regulator, together with pgov, of the transcriptional activator nuc-1, which controls the expression of phosphorous acquisition enzymes. This Neurospora crassa (strain ATCC 24698 / 74-OR23-1A / CBS 708.71 / DSM 1257 / FGSC 987) protein is Nuc-1 negative regulatory protein preg (preg).